We begin with the raw amino-acid sequence, 131 residues long: Profilin-1 (131 aa).

This sequence belongs to the profilin family. As to quaternary structure, occurs in many kinds of cells as a complex with monomeric actin in a 1:1 ratio.

The protein localises to the cytoplasm. It is found in the cytoskeleton. Binds to actin and affects the structure of the cytoskeleton. At high concentrations, profilin prevents the polymerization of actin, whereas it enhances it at low concentrations. By binding to PIP2, it inhibits the formation of IP3 and DG. This is Profilin-1 (PRO1) from Hordeum vulgare (Barley).